A 162-amino-acid polypeptide reads, in one-letter code: Transcription elongation factor GreA (162 aa).

Positions 50-75 (YHAAREEQGHLESRIRQLQELLRTAK) form a coiled coil.

This sequence belongs to the GreA/GreB family.

Functionally, necessary for efficient RNA polymerase transcription elongation past template-encoded arresting sites. The arresting sites in DNA have the property of trapping a certain fraction of elongating RNA polymerases that pass through, resulting in locked ternary complexes. Cleavage of the nascent transcript by cleavage factors such as GreA or GreB allows the resumption of elongation from the new 3'terminus. GreA releases sequences of 2 to 3 nucleotides. The chain is Transcription elongation factor GreA from Saccharopolyspora erythraea (strain ATCC 11635 / DSM 40517 / JCM 4748 / NBRC 13426 / NCIMB 8594 / NRRL 2338).